A 250-amino-acid polypeptide reads, in one-letter code: Putative inner dynein arm light chain, axonemal (250 aa).

A coiled-coil region spans residues 168–250; sequence MRKALQAHEE…QLEGITAPKK (83 aa).

Belongs to the inner dynein arm light chain family.

It localises to the cell projection. The protein resides in the cilium. It is found in the dynein axonemal particle. May play a dynamic role in flagellar motility. This Drosophila melanogaster (Fruit fly) protein is Putative inner dynein arm light chain, axonemal.